An 875-amino-acid polypeptide reads, in one-letter code: Neurotrypsin (875 aa).

An N-terminal signal peptide occupies residues 1 to 20 (MTLARFVLALVLGALPEVVG). An N-linked (GlcNAc...) asparagine glycan is attached at Asn26. Positions 30–87 (HHRHRHSPPPGPQYPYYLPTHQRPPRTRPPPPLPRFPRPPRALPAQRPHALQAGHTPR) are disordered. Residues 56–71 (TRPPPPLPRFPRPPRA) are compositionally biased toward pro residues. Residues 93–165 (CPAGELWVSV…GKVDWGYCDC (73 aa)) form the Kringle domain. Disulfide bonds link Cys93–Cys165, Cys109–Cys149, Cys138–Cys163, Cys195–Cys259, Cys208–Cys269, Cys239–Cys249, Cys305–Cys369, Cys318–Cys379, Cys349–Cys359, Cys412–Cys475, Cys425–Cys485, Cys455–Cys465, Cys525–Cys589, Cys538–Cys599, Cys569–Cys579, Cys619–Cys750, Cys661–Cys677, Cys765–Cys831, Cys794–Cys808, and Cys821–Cys850. SRCR domains follow at residues 170–271 (VRLR…TCSF), 280–381 (IRLV…SCTP), 387–487 (IRLA…ACYP), and 500–601 (VRLM…ICDY). The zymogen activation region stretch occupies residues 619–630 (CGLRLLHRRQKR). In terms of domain architecture, Peptidase S1 spans 631–874 (IIGGKNSLRG…FVPWIKSVTK (244 aa)). Catalysis depends on His676, which acts as the Charge relay system. Asn683 is a glycosylation site (N-linked (GlcNAc...) asparagine). The Charge relay system role is filled by Asp726. Catalysis depends on Ser825, which acts as the Charge relay system.

It belongs to the peptidase S1 family.

Its subcellular location is the secreted. Its function is as follows. Plays a role in neuronal plasticity and the proteolytic action may subserve structural reorganizations associated with learning and memory operations. The sequence is that of Neurotrypsin (PRSS12) from Macaca mulatta (Rhesus macaque).